A 393-amino-acid chain; its full sequence is Formate-dependent phosphoribosylglycinamide formyltransferase (393 aa).

Residues 22–23 and E82 contribute to the N(1)-(5-phospho-beta-D-ribosyl)glycinamide site; that span reads EL. Residues R114, K155, 160-165, 195-198, and E203 contribute to the ATP site; these read SSGHGQ and EGFV. The ATP-grasp domain occupies 119-308; it reads RLAAEELGLP…QFALHARAVL (190 aa). The Mg(2+) site is built by E267 and E279. Residues D286, K356, and 363 to 364 contribute to the N(1)-(5-phospho-beta-D-ribosyl)glycinamide site; that span reads RR.

This sequence belongs to the PurK/PurT family. As to quaternary structure, homodimer.

It catalyses the reaction N(1)-(5-phospho-beta-D-ribosyl)glycinamide + formate + ATP = N(2)-formyl-N(1)-(5-phospho-beta-D-ribosyl)glycinamide + ADP + phosphate + H(+). The protein operates within purine metabolism; IMP biosynthesis via de novo pathway; N(2)-formyl-N(1)-(5-phospho-D-ribosyl)glycinamide from N(1)-(5-phospho-D-ribosyl)glycinamide (formate route): step 1/1. Involved in the de novo purine biosynthesis. Catalyzes the transfer of formate to 5-phospho-ribosyl-glycinamide (GAR), producing 5-phospho-ribosyl-N-formylglycinamide (FGAR). Formate is provided by PurU via hydrolysis of 10-formyl-tetrahydrofolate. The polypeptide is Formate-dependent phosphoribosylglycinamide formyltransferase (Parabacteroides distasonis (strain ATCC 8503 / DSM 20701 / CIP 104284 / JCM 5825 / NCTC 11152)).